Consider the following 623-residue polypeptide: Glutathione import ATP-binding protein GsiA (623 aa).

ABC transporter domains are found at residues 15–269 (VSGL…QTLL) and 325–564 (LRSG…RKLM). ATP contacts are provided by residues 49–56 (GESGSGKS) and 357–364 (GESGSGKS).

Belongs to the ABC transporter superfamily. Glutathione importer (TC 3.A.1.5.11) family. As to quaternary structure, the complex is composed of two ATP-binding proteins (GsiA), two transmembrane proteins (GsiC and GsiD) and a solute-binding protein (GsiB).

It is found in the cell inner membrane. It carries out the reaction glutathione(out) + ATP + H2O = glutathione(in) + ADP + phosphate + H(+). In terms of biological role, part of the ABC transporter complex GsiABCD involved in glutathione import. Responsible for energy coupling to the transport system. This Salmonella paratyphi A (strain ATCC 9150 / SARB42) protein is Glutathione import ATP-binding protein GsiA.